A 535-amino-acid polypeptide reads, in one-letter code: Bifunctional purine biosynthesis protein PurH (535 aa).

The MGS-like domain maps to Thr-6 to Val-151.

The protein belongs to the PurH family.

The catalysed reaction is (6R)-10-formyltetrahydrofolate + 5-amino-1-(5-phospho-beta-D-ribosyl)imidazole-4-carboxamide = 5-formamido-1-(5-phospho-D-ribosyl)imidazole-4-carboxamide + (6S)-5,6,7,8-tetrahydrofolate. It carries out the reaction IMP + H2O = 5-formamido-1-(5-phospho-D-ribosyl)imidazole-4-carboxamide. It participates in purine metabolism; IMP biosynthesis via de novo pathway; 5-formamido-1-(5-phospho-D-ribosyl)imidazole-4-carboxamide from 5-amino-1-(5-phospho-D-ribosyl)imidazole-4-carboxamide (10-formyl THF route): step 1/1. The protein operates within purine metabolism; IMP biosynthesis via de novo pathway; IMP from 5-formamido-1-(5-phospho-D-ribosyl)imidazole-4-carboxamide: step 1/1. The sequence is that of Bifunctional purine biosynthesis protein PurH from Ectopseudomonas mendocina (strain ymp) (Pseudomonas mendocina).